The sequence spans 430 residues: Enolase (430 aa).

Glutamine 163 is a binding site for (2R)-2-phosphoglycerate. Glutamate 205 acts as the Proton donor in catalysis. 3 residues coordinate Mg(2+): aspartate 242, glutamate 285, and aspartate 312. Residues lysine 337, arginine 366, serine 367, and lysine 388 each contribute to the (2R)-2-phosphoglycerate site. Lysine 337 functions as the Proton acceptor in the catalytic mechanism.

This sequence belongs to the enolase family. Requires Mg(2+) as cofactor.

It localises to the cytoplasm. The protein resides in the secreted. Its subcellular location is the cell surface. It carries out the reaction (2R)-2-phosphoglycerate = phosphoenolpyruvate + H2O. The protein operates within carbohydrate degradation; glycolysis; pyruvate from D-glyceraldehyde 3-phosphate: step 4/5. Functionally, catalyzes the reversible conversion of 2-phosphoglycerate (2-PG) into phosphoenolpyruvate (PEP). It is essential for the degradation of carbohydrates via glycolysis. The chain is Enolase from Bifidobacterium animalis subsp. lactis (strain AD011).